The primary structure comprises 209 residues: Putative 3-methyladenine DNA glycosylase (209 aa).

The disordered stretch occupies residues 189–209 (HVSTTRLGAPKKKRQKRLERR). A compositionally biased stretch (basic residues) spans 197–209 (APKKKRQKRLERR).

It belongs to the DNA glycosylase MPG family.

This is Putative 3-methyladenine DNA glycosylase from Chlorobaculum parvum (strain DSM 263 / NCIMB 8327) (Chlorobium vibrioforme subsp. thiosulfatophilum).